Here is a 250-residue protein sequence, read N- to C-terminus: NH(3)-dependent NAD(+) synthetase (250 aa).

Position 30 to 37 (30 to 37) interacts with ATP; the sequence is GVSGGIDS. Aspartate 36 contacts Mg(2+). Deamido-NAD(+) is bound at residue arginine 117. Threonine 137 is an ATP binding site. Glutamate 142 contributes to the Mg(2+) binding site. Deamido-NAD(+)-binding residues include lysine 150 and aspartate 157. Residues lysine 166 and serine 188 each coordinate ATP. 234–235 is a binding site for deamido-NAD(+); that stretch reads HK.

The protein belongs to the NAD synthetase family. In terms of assembly, homodimer.

The catalysed reaction is deamido-NAD(+) + NH4(+) + ATP = AMP + diphosphate + NAD(+) + H(+). The protein operates within cofactor biosynthesis; NAD(+) biosynthesis; NAD(+) from deamido-NAD(+) (ammonia route): step 1/1. In terms of biological role, catalyzes the ATP-dependent amidation of deamido-NAD to form NAD. Uses ammonia as a nitrogen source. In Mannheimia succiniciproducens (strain KCTC 0769BP / MBEL55E), this protein is NH(3)-dependent NAD(+) synthetase.